The chain runs to 406 residues: MTFSVDKVRADFPVLSREVNGLPLAYLDSAASAQKPSQVIDAEAEFYRHGYAAVHRGIHTLSAQATEKMENVRKRASLFINARSAEELVFVRGTTEGINLVANSWGNSNVRAGDNIIISQMEHHANIVPWQMLCARVGAELRVIPLNPDGTLQLETLPTLFDEKTRLLAITHVSNVLGTENPLAEMITLAHQHGAKVLVDGAQAVMHHPVDVQALDCDFYVFSVHKLYGPTGIGILYVKEALLQEMPPWEGGGSMIATVSLSEGTTWTKAPWRFEAGTPNTGGIIGLGAALEYVSALGLNNIAEYEQNLMHYALSQLESVPDLTLYGPQNRLGVIAFNLGKHHAYDVGSFLDNYGIAVRTGHHCAMPLMAYYNVPAMCRASLAMYNTHEEVDRLVTGLQRIHRLLG.

N6-(pyridoxal phosphate)lysine is present on Lys226. Cys364 functions as the Cysteine persulfide intermediate in the catalytic mechanism.

Belongs to the class-V pyridoxal-phosphate-dependent aminotransferase family. Csd subfamily. As to quaternary structure, homodimer. Interacts with SufE and the SufBCD complex composed of SufB, SufC and SufD. The interaction with SufE is required to mediate the direct transfer of the sulfur atom from the S-sulfanylcysteine. Pyridoxal 5'-phosphate is required as a cofactor.

It localises to the cytoplasm. The catalysed reaction is (sulfur carrier)-H + L-cysteine = (sulfur carrier)-SH + L-alanine. The enzyme catalyses L-selenocysteine + AH2 = hydrogenselenide + L-alanine + A + H(+). The protein operates within cofactor biosynthesis; iron-sulfur cluster biosynthesis. Its function is as follows. Cysteine desulfurases mobilize the sulfur from L-cysteine to yield L-alanine, an essential step in sulfur metabolism for biosynthesis of a variety of sulfur-containing biomolecules. Component of the suf operon, which is activated and required under specific conditions such as oxidative stress and iron limitation. Acts as a potent selenocysteine lyase in vitro, that mobilizes selenium from L-selenocysteine. Selenocysteine lyase activity is however unsure in vivo. In Escherichia coli O6:K15:H31 (strain 536 / UPEC), this protein is Cysteine desulfurase.